The sequence spans 366 residues: Phospho-N-acetylmuramoyl-pentapeptide-transferase (366 aa).

The next 10 helical transmembrane spans lie at 27–47, 71–91, 93–113, 134–154, 174–194, 205–225, 245–265, 268–288, 294–314, and 343–363; these read AALF…INSL, TPTM…LLWA, LSNV…AIGF, LGIE…TALA, FLIN…VGAG, GLAI…AYLA, LAVV…FNAP, AIFM…TVAV, IVMA…IIQV, and QVVI…LSTL.

The protein belongs to the glycosyltransferase 4 family. MraY subfamily. Requires Mg(2+) as cofactor.

The protein resides in the cell inner membrane. The enzyme catalyses UDP-N-acetyl-alpha-D-muramoyl-L-alanyl-gamma-D-glutamyl-meso-2,6-diaminopimeloyl-D-alanyl-D-alanine + di-trans,octa-cis-undecaprenyl phosphate = di-trans,octa-cis-undecaprenyl diphospho-N-acetyl-alpha-D-muramoyl-L-alanyl-D-glutamyl-meso-2,6-diaminopimeloyl-D-alanyl-D-alanine + UMP. Its pathway is cell wall biogenesis; peptidoglycan biosynthesis. Catalyzes the initial step of the lipid cycle reactions in the biosynthesis of the cell wall peptidoglycan: transfers peptidoglycan precursor phospho-MurNAc-pentapeptide from UDP-MurNAc-pentapeptide onto the lipid carrier undecaprenyl phosphate, yielding undecaprenyl-pyrophosphoryl-MurNAc-pentapeptide, known as lipid I. The protein is Phospho-N-acetylmuramoyl-pentapeptide-transferase of Rhizobium etli (strain CIAT 652).